A 149-amino-acid chain; its full sequence is Nucleoside diphosphate kinase (149 aa).

ATP-binding residues include Lys9, Phe57, Arg85, Thr91, Arg102, and Asn112. Residue His115 is the Pros-phosphohistidine intermediate of the active site.

The protein belongs to the NDK family. Homotetramer. Mg(2+) serves as cofactor.

The protein resides in the cytoplasm. It carries out the reaction a 2'-deoxyribonucleoside 5'-diphosphate + ATP = a 2'-deoxyribonucleoside 5'-triphosphate + ADP. The catalysed reaction is a ribonucleoside 5'-diphosphate + ATP = a ribonucleoside 5'-triphosphate + ADP. Major role in the synthesis of nucleoside triphosphates other than ATP. The ATP gamma phosphate is transferred to the NDP beta phosphate via a ping-pong mechanism, using a phosphorylated active-site intermediate. In Desulfitobacterium hafniense (strain DSM 10664 / DCB-2), this protein is Nucleoside diphosphate kinase.